The sequence spans 226 residues: MVSLRRRRLLGLCCGPNGYVTPLPFLTAEEMITGIPNPNARAAYNPGPAETVTTVIVEKKAIEERSRRTRSKHMHFRSDYSDISPVNSDSISPKYQPPKRRKQHRRKRVHNQEPCLMRGVYYKNMKWQAAIKVEKKQIHLGTFSSQEEAARLYDRAAFMCGREPNFELSEEVIRELKQQSWEEFLNCTRRTITNKKPKSRIEHEDTKINASMPHQPEEEEQDSDKM.

Disordered regions lie at residues 63-109 and 195-226; these read EERS…RKRV and KKPK…SDKM. Over residues 97-109 the composition is skewed to basic residues; that stretch reads PPKRRKQHRRKRV. The segment at residues 105-171 is a DNA-binding region (AP2/ERF); sequence RRKRVHNQEP…REPNFELSEE (67 aa). Positions 217–226 are enriched in acidic residues; sequence EEEEQDSDKM.

This sequence belongs to the AP2/ERF transcription factor family.

It localises to the nucleus. Functionally, probably acts as a transcriptional activator. Binds to the GCC-box pathogenesis-related promoter element. May be involved in the regulation of gene expression by stress factors and by components of stress signal transduction pathways. The sequence is that of Ethylene-responsive transcription factor-like protein At4g13040 from Arabidopsis thaliana (Mouse-ear cress).